The following is a 73-amino-acid chain: Alpha-bungarotoxin N3 (73 aa).

Cystine bridges form between Cys3-Cys23, Cys16-Cys43, Cys28-Cys32, Cys47-Cys58, and Cys59-Cys64.

Belongs to the three-finger toxin family. Long-chain subfamily. Type II alpha-neurotoxin sub-subfamily. In terms of assembly, monomer in solution, homodimer in crystal state. As to expression, expressed by the venom gland.

The protein resides in the secreted. Its function is as follows. Binds with high affinity to muscular (alpha-1/CHRNA1) and neuronal (alpha-7/CHRNA7) nicotinic acetylcholine receptor (nAChR) and inhibits acetylcholine from binding to the receptor, thereby impairing neuromuscular and neuronal transmission. Mice injected with this toxin develop flaccid paralysis followed by death. Irreversibly inhibits twitches in a concentration-dependent manner in rat phrenic nerve-hemidiaphragm and chick biventer cervicis muscle. The protein is Alpha-bungarotoxin N3 of Bungarus candidus (Malayan krait).